We begin with the raw amino-acid sequence, 634 residues long: MMEVRPTTLIDHINSPADLRALKPEQLPQVCRELRRYILEVLSVTPGHLGSSLGAVDFTVALHYVFDTPYDRIVWDVGHQAYSHKILTGRREDFRHLRQWGGISGFPSPKESEYDTFPAGHASNSISAALGMAVASAAKDEKRKVIAVIGDGSMTGGMAFEGLNNASSFPNNLLIILNDNNMSIDRNVGGLNRYMVDILTSKTYNTIRYDLYKGLRKINLISETNRKNLLRFNNSFKALLARESNLFEGFSIRYFGPVDGNNVLRLVEVLNQIKDMAGPKILHLRTIKGKGYSPAEKQATIWHAPGEFDIKSGERKKGENKPEPPKFQDVFGHTLVELADRDERVVGVTPAMPTGCSMTFLMKKYPNRAYDVGIAEGHAVTFSAGLAKEGLIPFCNIYSSFIQRGYDQVIHDVALSGSHVVICLDRAGLVGEDGATHHGVFDMAFLRCVPDIVVASPLNEHELRNLMLTAYKGYDGPMVIRYPRGKGVLTDWRNTPRLVEIARGRCLTEGEAIAFLSIGPIGNMVQKVVERLAEKGVSAAHYDMVFLKPLDEEMLHGIAKKFDTIISVEDGCIQGGFGSAVMEFMADHDYHPRIRRVGVPDRFIGQGSVPEQYADCGMDADSLLHLTEELLLHP.

Residues His-79 and 120-122 (GHA) contribute to the thiamine diphosphate site. Mg(2+) is bound at residue Asp-151. Thiamine diphosphate contacts are provided by residues 152-153 (GS), Asn-180, Tyr-292, and Glu-376. Asn-180 is a binding site for Mg(2+).

Belongs to the transketolase family. DXPS subfamily. Homodimer. It depends on Mg(2+) as a cofactor. Requires thiamine diphosphate as cofactor.

The catalysed reaction is D-glyceraldehyde 3-phosphate + pyruvate + H(+) = 1-deoxy-D-xylulose 5-phosphate + CO2. It functions in the pathway metabolic intermediate biosynthesis; 1-deoxy-D-xylulose 5-phosphate biosynthesis; 1-deoxy-D-xylulose 5-phosphate from D-glyceraldehyde 3-phosphate and pyruvate: step 1/1. Functionally, catalyzes the acyloin condensation reaction between C atoms 2 and 3 of pyruvate and glyceraldehyde 3-phosphate to yield 1-deoxy-D-xylulose-5-phosphate (DXP). In Porphyromonas gingivalis (strain ATCC BAA-308 / W83), this protein is 1-deoxy-D-xylulose-5-phosphate synthase.